The following is a 420-amino-acid chain: UDP-glucuronic acid decarboxylase 1 (420 aa).

Position 1 is an N-acetylmethionine (M1). Residues 1-19 (MVSKALLRLVSAVNRRRMK) lie on the Cytoplasmic side of the membrane. A helical; Signal-anchor for type II membrane protein transmembrane segment spans residues 20 to 40 (LLLGIALLAYVASVWGNFVNM). Residues 41 to 420 (RSIQENGELK…RIKKGRTRHN (380 aa)) are Lumenal-facing. At T94 the chain carries Phosphothreonine. The NAD(+) site is built by G98, F99, V100, D119, N120, F122, T123, G124, D144, and V145. The UDP-alpha-D-glucuronate site is built by L149 and Y150. Residues L159 and S161 each coordinate NAD(+). K177 lines the UDP-alpha-D-glucuronate pocket. Residue T178 participates in NAD(+) binding. UDP-alpha-D-glucuronate is bound by residues N185, G188, K191, and R192. Residues A200, Y231, and K235 each coordinate NAD(+). The active-site Proton acceptor is Y231. Residues Y245, Q248, and E249 each contribute to the UDP-alpha-D-glucuronate site. T261, H267, and R272 together coordinate NAD(+). N316 carries N-linked (GlcNAc...) asparagine glycosylation.

Belongs to the NAD(P)-dependent epimerase/dehydratase family. UDP-glucuronic acid decarboxylase subfamily. In terms of assembly, homodimer and homotetramer. Interacts with AKT1. NAD(+) is required as a cofactor.

It is found in the golgi apparatus. It localises to the golgi stack membrane. It carries out the reaction UDP-alpha-D-glucuronate + H(+) = UDP-alpha-D-xylose + CO2. It participates in nucleotide-sugar biosynthesis; UDP-alpha-D-xylose biosynthesis; UDP-alpha-D-xylose from UDP-alpha-D-glucuronate: step 1/1. Functionally, catalyzes the NAD-dependent decarboxylation of UDP-glucuronic acid to UDP-xylose. Necessary for the biosynthesis of the core tetrasaccharide in glycosaminoglycan biosynthesis. The polypeptide is UDP-glucuronic acid decarboxylase 1 (UXS1) (Pongo abelii (Sumatran orangutan)).